Here is a 177-residue protein sequence, read N- to C-terminus: ATP-dependent protease subunit HslV (177 aa).

The active site involves Thr2. Na(+)-binding residues include Gly158, Cys161, and Thr164.

It belongs to the peptidase T1B family. HslV subfamily. As to quaternary structure, a double ring-shaped homohexamer of HslV is capped on each side by a ring-shaped HslU homohexamer. The assembly of the HslU/HslV complex is dependent on binding of ATP.

The protein resides in the cytoplasm. It catalyses the reaction ATP-dependent cleavage of peptide bonds with broad specificity.. With respect to regulation, allosterically activated by HslU binding. In terms of biological role, protease subunit of a proteasome-like degradation complex believed to be a general protein degrading machinery. This is ATP-dependent protease subunit HslV from Pseudomonas aeruginosa (strain LESB58).